The chain runs to 663 residues: MDRKYLANAIRALSMDGVQQANSGHPGAPMGMADIAEVLWRSHLNHNPSNPEWADRDRFVLSNGHGSMLIYSLLHLSGYELSIDDLKNFRQLHSKTPGHPEYGYAPGIETTTGPLGQGITNAVGMAMAEKALAAQFNKEGHDIVDHFTYVFMGDGCLMEGISHEACSLAGTLGLGKLIAFWDDNGISIDGHVEGWFSDDTPKRFEAYGWHVIPAVDGHDADAINAAIEAAKADPRPTLICTKTIIGFGSPNKSGSHDCHGAPLGAEEIAATRKELGWEHGPFEIPQEVYAEWSAKETGAAKEAAWNEKFAAYEAAYPELAAEFKRRVNGELPAEWEEKASQIIADLQANPANIASRKASQNALEAFGALLPEFMGGSADLAPSNLTMWSGSKSLEANDFSGNYIHYGVREFGMTAIMNGIALHGGFVPYGATFLMFMEYARNAMRMAALMKIQNIQVYTHDSIGLGEDGPTHQPVEQIASLRLTPNMNTWRPCDQVESAVAWKLAIERKDAPTALIFSRQNLAQQPRSAEQVADIAKGGYILKDSEGKPELILIATGSEVELAVKAAEQLTAEGKKVRVVSMPSTDAFDKQDADYREAVLPSDVTARIAIEAGIADFWYKYVGFDGRIIGMTTFGESAPADQLFEMFGFTVENVVNTAKELLA.

Substrate is bound at residue H25. Thiamine diphosphate-binding positions include H65 and 113-115 (GPL). D154 contacts Mg(2+). The thiamine diphosphate site is built by G155 and N184. 2 residues coordinate Mg(2+): N184 and I186. Residues H259, R356, and S383 each coordinate substrate. Position 259 (H259) interacts with thiamine diphosphate. E410 (proton donor) is an active-site residue. F436 is a binding site for thiamine diphosphate. Substrate contacts are provided by H460, D468, and R519.

The protein belongs to the transketolase family. Homodimer. It depends on Mg(2+) as a cofactor. The cofactor is Ca(2+). Mn(2+) serves as cofactor. Co(2+) is required as a cofactor. Requires thiamine diphosphate as cofactor.

The enzyme catalyses D-sedoheptulose 7-phosphate + D-glyceraldehyde 3-phosphate = aldehydo-D-ribose 5-phosphate + D-xylulose 5-phosphate. Functionally, catalyzes the transfer of a two-carbon ketol group from a ketose donor to an aldose acceptor, via a covalent intermediate with the cofactor thiamine pyrophosphate. The sequence is that of Transketolase 2 (tkt2) from Vibrio parahaemolyticus serotype O3:K6 (strain RIMD 2210633).